The chain runs to 517 residues: Maturase K (517 aa).

Belongs to the intron maturase 2 family. MatK subfamily.

Its subcellular location is the plastid. It is found in the chloroplast. Its function is as follows. Usually encoded in the trnK tRNA gene intron. Probably assists in splicing its own and other chloroplast group II introns. In Juncus effusus (Soft rush), this protein is Maturase K.